Consider the following 878-residue polypeptide: Phosphoenolpyruvate carboxylase (878 aa).

Catalysis depends on residues H138 and K545.

Belongs to the PEPCase type 1 family. Requires Mg(2+) as cofactor.

The enzyme catalyses oxaloacetate + phosphate = phosphoenolpyruvate + hydrogencarbonate. Forms oxaloacetate, a four-carbon dicarboxylic acid source for the tricarboxylic acid cycle. This Shewanella sediminis (strain HAW-EB3) protein is Phosphoenolpyruvate carboxylase.